Consider the following 333-residue polypeptide: Phosphate acyltransferase (333 aa).

This sequence belongs to the PlsX family. As to quaternary structure, homodimer. Probably interacts with PlsY.

It is found in the cytoplasm. The enzyme catalyses a fatty acyl-[ACP] + phosphate = an acyl phosphate + holo-[ACP]. The protein operates within lipid metabolism; phospholipid metabolism. Functionally, catalyzes the reversible formation of acyl-phosphate (acyl-PO(4)) from acyl-[acyl-carrier-protein] (acyl-ACP). This enzyme utilizes acyl-ACP as fatty acyl donor, but not acyl-CoA. This Thermoanaerobacterium thermosaccharolyticum (strain ATCC 7956 / DSM 571 / NCIMB 9385 / NCA 3814 / NCTC 13789 / WDCM 00135 / 2032) (Clostridium thermosaccharolyticum) protein is Phosphate acyltransferase.